The primary structure comprises 375 residues: Tyrosine--tRNA ligase (375 aa).

L-tyrosine-binding residues include tyrosine 37, tyrosine 168, glutamine 172, aspartate 175, and glutamine 190. The 'KMSKS' region signature appears at 251–255 (KMSKS). Lysine 254 is a binding site for ATP.

It belongs to the class-I aminoacyl-tRNA synthetase family. TyrS type 4 subfamily. Homodimer.

It is found in the cytoplasm. The catalysed reaction is tRNA(Tyr) + L-tyrosine + ATP = L-tyrosyl-tRNA(Tyr) + AMP + diphosphate + H(+). In terms of biological role, catalyzes the attachment of tyrosine to tRNA(Tyr) in a two-step reaction: tyrosine is first activated by ATP to form Tyr-AMP and then transferred to the acceptor end of tRNA(Tyr). The sequence is that of Tyrosine--tRNA ligase from Thermococcus sibiricus (strain DSM 12597 / MM 739).